The following is a 203-amino-acid chain: Proteasome subunit beta 1 (203 aa).

Positions 1 to 7 are cleaved as a propeptide — removed in mature form; by autocatalysis; that stretch reads MTEKLKG. The active-site Nucleophile is the threonine 8.

It belongs to the peptidase T1B family. As to quaternary structure, the 20S proteasome core is composed of 14 alpha and 14 beta subunits that assemble into four stacked heptameric rings, resulting in a barrel-shaped structure. The two inner rings, each composed of seven catalytic beta subunits, are sandwiched by two outer rings, each composed of seven alpha subunits. The catalytic chamber with the active sites is on the inside of the barrel. Has a gated structure, the ends of the cylinder being occluded by the N-termini of the alpha-subunits. Is capped at one or both ends by the proteasome regulatory ATPase, PAN.

Its subcellular location is the cytoplasm. The enzyme catalyses Cleavage of peptide bonds with very broad specificity.. Its activity is regulated as follows. The formation of the proteasomal ATPase PAN-20S proteasome complex, via the docking of the C-termini of PAN into the intersubunit pockets in the alpha-rings, triggers opening of the gate for substrate entry. Interconversion between the open-gate and close-gate conformations leads to a dynamic regulation of the 20S proteasome proteolysis activity. In terms of biological role, component of the proteasome core, a large protease complex with broad specificity involved in protein degradation. The chain is Proteasome subunit beta 1 from Thermococcus kodakarensis (strain ATCC BAA-918 / JCM 12380 / KOD1) (Pyrococcus kodakaraensis (strain KOD1)).